The primary structure comprises 154 residues: U1 small nuclear ribonucleoprotein C (154 aa).

Residues Y4–F36 form a Matrin-type zinc finger.

The protein belongs to the U1 small nuclear ribonucleoprotein C family. As to quaternary structure, U1 snRNP is composed of the 7 core Sm proteins B/B', D1, D2, D3, E, F and G that assemble in a heptameric protein ring on the Sm site of the small nuclear RNA to form the core snRNP, and at least 3 U1 snRNP-specific proteins U1-70K, U1-A and U1-C. U1-C interacts with U1 snRNA and the 5' splice-site region of the pre-mRNA.

The protein resides in the nucleus. Its function is as follows. Component of the spliceosomal U1 snRNP, which is essential for recognition of the pre-mRNA 5' splice-site and the subsequent assembly of the spliceosome. U1-C is directly involved in initial 5' splice-site recognition for both constitutive and regulated alternative splicing. The interaction with the 5' splice-site seems to precede base-pairing between the pre-mRNA and the U1 snRNA. Stimulates commitment or early (E) complex formation by stabilizing the base pairing of the 5' end of the U1 snRNA and the 5' splice-site region. The protein is U1 small nuclear ribonucleoprotein C of Aedes aegypti (Yellowfever mosquito).